The primary structure comprises 463 residues: Mitochondrial dynamics protein MID51 (463 aa).

At 1-23 (MAGAGERKGKKDDNGIGTAIDFV) the chain is on the mitochondrial intermembrane side. The helical transmembrane segment at 24 to 46 (LSNARLVLGVGGAAMLGIATLAV) threads the bilayer. Residues 47–463 (KRMYDRAISA…LSEPEVLLQT (417 aa)) are Cytoplasmic-facing. Residues 49 to 195 (MYDRAISAPT…LSGSLYDDLQ (147 aa)) are dimerization. 4 positions are modified to phosphoserine: serine 55, serine 59, serine 79, and serine 94. The segment at 57–77 (PTSPTRLSHSGKRSWEEPNWM) is disordered. Residues 160–169 (AAVDICAELR) form an important for interaction with DNM1L region. 3 residues coordinate ADP: serine 187, serine 189, and histidine 201. Residues 234 to 243 (RRENPEYFPR) are important for interaction with DNM1L. ADP is bound by residues serine 340, arginine 342, and lysine 368.

This sequence belongs to the MID49/MID51 family. Homodimer. Interacts with DNM1L.

The protein localises to the mitochondrion outer membrane. In terms of biological role, mitochondrial outer membrane protein which regulates mitochondrial fission/fusion dynamics. Promotes the recruitment and association of the fission mediator dynamin-related protein 1 (DNM1L) to the mitochondrial surface independently of the mitochondrial fission FIS1 and MFF proteins. Regulates DNM1L GTPase activity and DNM1L oligomerization. Binds ADP and can also bind GDP, although with lower affinity. Does not bind CDP, UDP, ATP, AMP or GTP. Inhibits DNM1L GTPase activity in the absence of bound ADP. Requires ADP to stimulate DNM1L GTPase activity and the assembly of DNM1L into long, oligomeric tubules with a spiral pattern, as opposed to the ring-like DNM1L oligomers observed in the absence of bound ADP. Does not require ADP for its function in recruiting DNM1L. The chain is Mitochondrial dynamics protein MID51 (Mief1) from Mus musculus (Mouse).